The following is a 147-amino-acid chain: Large ribosomal subunit protein uL13 (147 aa).

This sequence belongs to the universal ribosomal protein uL13 family. As to quaternary structure, part of the 50S ribosomal subunit.

Its function is as follows. This protein is one of the early assembly proteins of the 50S ribosomal subunit, although it is not seen to bind rRNA by itself. It is important during the early stages of 50S assembly. The chain is Large ribosomal subunit protein uL13 from Deinococcus geothermalis (strain DSM 11300 / CIP 105573 / AG-3a).